We begin with the raw amino-acid sequence, 86 residues long: Synergistic-like venom protein (86 aa).

The signal sequence occupies residues 1 to 21 (MKTLLLTLVVVTIVCLDLGYT). 4 disulfide bridges follow: cysteine 24–cysteine 45, cysteine 38–cysteine 63, cysteine 67–cysteine 78, and cysteine 79–cysteine 84.

Belongs to the three-finger toxin family. Short-chain subfamily. Aminergic toxin sub-subfamily. As to expression, expressed by the venom gland.

Its subcellular location is the secreted. The protein is Synergistic-like venom protein of Dendroaspis angusticeps (Eastern green mamba).